The sequence spans 64 residues: Translation machinery-associated protein 7 homolog (64 aa).

Residues Met-1–Lys-64 form a disordered region. Residues Met-27–Lys-38 are compositionally biased toward basic and acidic residues. Residues Met-27 to Lys-50 adopt a coiled-coil conformation. The segment covering Ala-39–Lys-50 has biased composition (low complexity). Residues Leu-53–Lys-64 are compositionally biased toward gly residues.

The sequence is that of Translation machinery-associated protein 7 homolog from Drosophila melanogaster (Fruit fly).